Consider the following 382-residue polypeptide: Beta-1,4-galactosyltransferase 6 (382 aa).

The Cytoplasmic segment spans residues 1–15; it reads MSALKRMMRVSNRSL. Residues 16 to 35 form a helical; Signal-anchor for type II membrane protein membrane-spanning segment; the sequence is IAFIFFFSLSTSCLYFIYVA. Over 36–382 the chain is Lumenal; sequence PGIANTYLFM…MPELAPIEDY (347 aa). 6 N-linked (GlcNAc...) asparagine glycosylation sites follow: Asn71, Asn75, Asn83, Asn84, Asn99, and Asn122. A disulfide bridge connects residues Cys108 and Cys152. UDP-alpha-D-galactose-binding positions include 163–167, 202–204, 229–230, Tyr258, and Trp290; these read PFRNR, FNR, and VD. The cysteines at positions 223 and 242 are disulfide-linked. Residue Asp230 participates in Mn(2+) binding. 292 to 295 is a binding site for N-acetyl-D-glucosamine; sequence GEDD. An N-linked (GlcNAc...) asparagine glycan is attached at Asn307. Residue His323 coordinates Mn(2+). 323-324 is a UDP-alpha-D-galactose binding site; the sequence is HH. Arg334 lines the N-acetyl-D-glucosamine pocket. Residue Asn367 is glycosylated (N-linked (GlcNAc...) asparagine).

Belongs to the glycosyltransferase 7 family. Mn(2+) serves as cofactor. The cofactor is Mg(2+). Ca(2+) is required as a cofactor. In terms of tissue distribution, brain and kidney.

Its subcellular location is the golgi apparatus. It localises to the golgi stack membrane. It carries out the reaction a beta-D-glucosyl-(1&lt;-&gt;1')-N-acylsphing-4-enine + UDP-alpha-D-galactose = a beta-D-Gal-(1-&gt;4)-beta-D-Glc-(1&lt;-&gt;1)-Cer(d18:1(4E)) + UDP + H(+). It functions in the pathway protein modification; protein glycosylation. The protein operates within sphingolipid metabolism. Inhibited by EDTA. Its function is as follows. Catalyzes the synthesis of lactosylceramide (LacCer) via the transfer of galactose from UDP-galactose to glucosylceramide (GlcCer). LacCer is the starting point in the biosynthesis of all gangliosides (membrane-bound glycosphingolipids) which play pivotal roles in the CNS including neuronal maturation and axonal and myelin formation. The protein is Beta-1,4-galactosyltransferase 6 of Mus musculus (Mouse).